The chain runs to 262 residues: 3-methyl-2-oxobutanoate hydroxymethyltransferase (262 aa).

2 residues coordinate Mg(2+): aspartate 44 and aspartate 83. Residues 44-45, aspartate 83, and lysine 111 contribute to the 3-methyl-2-oxobutanoate site; that span reads DS. Glutamate 113 is a Mg(2+) binding site. Residue glutamate 180 is the Proton acceptor of the active site.

It belongs to the PanB family. As to quaternary structure, homodecamer; pentamer of dimers. Mg(2+) serves as cofactor.

The protein localises to the cytoplasm. The enzyme catalyses 3-methyl-2-oxobutanoate + (6R)-5,10-methylene-5,6,7,8-tetrahydrofolate + H2O = 2-dehydropantoate + (6S)-5,6,7,8-tetrahydrofolate. Its pathway is cofactor biosynthesis; (R)-pantothenate biosynthesis; (R)-pantoate from 3-methyl-2-oxobutanoate: step 1/2. Functionally, catalyzes the reversible reaction in which hydroxymethyl group from 5,10-methylenetetrahydrofolate is transferred onto alpha-ketoisovalerate to form ketopantoate. The protein is 3-methyl-2-oxobutanoate hydroxymethyltransferase of Alcanivorax borkumensis (strain ATCC 700651 / DSM 11573 / NCIMB 13689 / SK2).